The following is a 352-amino-acid chain: MSALPIPLLGQSLSALKDWAVAQGQPAYRGQQLHAWIYQKGIRSLEQVTVFPRAWREAVQSYPVGRSRIVQRTEARDGTVKFLLGLADGQLIETVGIPTAKRLTVCVSSQVGCPMACDFCATGKMGYRRNLELHEILDQVLTVQEDFGRRVSHVVFMGMGEPLLNRDTVVQAIRSLNQDIGIGQRHITLSTVGVPRQIAWLAQQDLQVTLAVSLHAPNQDLRQRLIPSASHYPLDTLIQDCRDYMLRTGRRVSFEYTLLSGVNDLPIHARQLAQLLQQASRSGVQLHVNLIPYNPISEADYQRPHPTRVREFVRQLEQHQVRATVRQTRGLDGNAACGQLRGSFLRSLPGDL.

Glu93 functions as the Proton acceptor in the catalytic mechanism. Residues 99 to 332 form the Radical SAM core domain; the sequence is TAKRLTVCVS…ATVRQTRGLD (234 aa). A disulfide bridge links Cys106 with Cys337. [4Fe-4S] cluster is bound by residues Cys113, Cys117, and Cys120. Residues 160–161, Ser190, 213–215, and Asn294 contribute to the S-adenosyl-L-methionine site; these read GE and SLH. Residue Cys337 is the S-methylcysteine intermediate of the active site.

This sequence belongs to the radical SAM superfamily. RlmN family. It depends on [4Fe-4S] cluster as a cofactor.

The protein localises to the cytoplasm. The enzyme catalyses adenosine(2503) in 23S rRNA + 2 reduced [2Fe-2S]-[ferredoxin] + 2 S-adenosyl-L-methionine = 2-methyladenosine(2503) in 23S rRNA + 5'-deoxyadenosine + L-methionine + 2 oxidized [2Fe-2S]-[ferredoxin] + S-adenosyl-L-homocysteine. It catalyses the reaction adenosine(37) in tRNA + 2 reduced [2Fe-2S]-[ferredoxin] + 2 S-adenosyl-L-methionine = 2-methyladenosine(37) in tRNA + 5'-deoxyadenosine + L-methionine + 2 oxidized [2Fe-2S]-[ferredoxin] + S-adenosyl-L-homocysteine. Functionally, specifically methylates position 2 of adenine 2503 in 23S rRNA and position 2 of adenine 37 in tRNAs. This Synechococcus sp. (strain JA-2-3B'a(2-13)) (Cyanobacteria bacterium Yellowstone B-Prime) protein is Probable dual-specificity RNA methyltransferase RlmN.